The sequence spans 422 residues: MRSVLSLALLAANVVTAAVVSPFDYSGYKVIRVPTQKDNVKEVQRIITDLNLDTWKYPKSEGQNADIVVPPSQITSFMERISGMSMEMMHEDLGMSISNETSFEAYSAGYAPDINWFKSYHSYQDHISYLQDLQGLFRTRSEYVDAGKSHEGRTIPALHIWGSGGKNSKPAIIFHGTIHAREWITTMVTEYLAWSLLSQYNKNADITSIVDNFDIWVFPIVNPDGFAFTQTSNRLWRKNRQPNPNARCPGRDLNRNYPYQWVGPGSSSNPCSDTYRGAQPGDGTEIKVHIANMKRIASYHGIAMFVDWHSYGQLFMSPYGYSCTARPPTDARHQELSRIFAQALRAVHGTPYRTGPICNTIYQVNGDSVDYALEVLKVKLSLTAELRDTGARGFVLPADQIVPSGEETLAGTVAMLKAVIRG.

Positions 1 to 17 are cleaved as a signal peptide; the sequence is MRSVLSLALLAANVVTA. Residues 18 to 112 constitute a propeptide, activation peptide; it reads AVVSPFDYSG…FEAYSAGYAP (95 aa). In terms of domain architecture, Peptidase M14 spans 119 to 419; the sequence is SYHSYQDHIS…AGTVAMLKAV (301 aa). Zn(2+)-binding residues include histidine 179 and glutamate 182. Residues 179–182, arginine 237, and 254–255 each bind substrate; these read HARE and NR. Cysteine 248 and cysteine 271 are disulfide-bonded. Histidine 309 is a binding site for Zn(2+). Residue 310–311 participates in substrate binding; that stretch reads SY. The Proton donor/acceptor role is filled by glutamate 385.

This sequence belongs to the peptidase M14 family. Zn(2+) serves as cofactor.

It is found in the secreted. Functionally, extracellular metalloprotease that contributes to pathogenicity. This chain is Metallocarboxypeptidase A (MCPA), found in Trichophyton tonsurans (Scalp ringworm fungus).